Consider the following 281-residue polypeptide: HTH-type transcriptional activator RhaR (281 aa).

One can recognise an HTH araC/xylS-type domain in the interval 178–276 (DKLLAALAAS…GMSPGQWRQR (99 aa)). 2 DNA-binding regions (H-T-H motif) span residues 195-216 (ERFCEQEGGSERALRQQFRQQT) and 243-266 (IGDIAMQCGFEDSNYFSVVFSREI).

As to quaternary structure, binds DNA as a dimer.

It is found in the cytoplasm. Its function is as follows. Activates expression of the rhaSR operon in response to L-rhamnose. This is HTH-type transcriptional activator RhaR from Klebsiella pneumoniae subsp. pneumoniae (strain ATCC 700721 / MGH 78578).